A 427-amino-acid polypeptide reads, in one-letter code: 3-phosphoshikimate 1-carboxyvinyltransferase (427 aa).

3 residues coordinate 3-phosphoshikimate: Lys20, Ser21, and Arg25. Residue Lys20 coordinates phosphoenolpyruvate. Gly92 and Arg120 together coordinate phosphoenolpyruvate. 3-phosphoshikimate is bound by residues Ser166, Gln168, Asp312, and Lys339. Gln168 provides a ligand contact to phosphoenolpyruvate. Asp312 (proton acceptor) is an active-site residue. Residues Arg343 and Arg385 each contribute to the phosphoenolpyruvate site.

Belongs to the EPSP synthase family. Monomer.

Its subcellular location is the cytoplasm. The catalysed reaction is 3-phosphoshikimate + phosphoenolpyruvate = 5-O-(1-carboxyvinyl)-3-phosphoshikimate + phosphate. It functions in the pathway metabolic intermediate biosynthesis; chorismate biosynthesis; chorismate from D-erythrose 4-phosphate and phosphoenolpyruvate: step 6/7. Functionally, catalyzes the transfer of the enolpyruvyl moiety of phosphoenolpyruvate (PEP) to the 5-hydroxyl of shikimate-3-phosphate (S3P) to produce enolpyruvyl shikimate-3-phosphate and inorganic phosphate. The protein is 3-phosphoshikimate 1-carboxyvinyltransferase of Streptococcus pyogenes serotype M28 (strain MGAS6180).